A 99-amino-acid chain; its full sequence is Acylphosphatase (99 aa).

The region spanning 5–97 (ILQVMIRGRV…RAGEKFSVLP (93 aa)) is the Acylphosphatase-like domain. Catalysis depends on residues R20 and N38.

The protein belongs to the acylphosphatase family.

The catalysed reaction is an acyl phosphate + H2O = a carboxylate + phosphate + H(+). The chain is Acylphosphatase (acyP) from Bradyrhizobium diazoefficiens (strain JCM 10833 / BCRC 13528 / IAM 13628 / NBRC 14792 / USDA 110).